The primary structure comprises 393 residues: 5-amino-6-(D-ribitylamino)uracil--L-tyrosine 4-hydroxyphenyl transferase (393 aa).

The Radical SAM core domain maps to 67–322 (VTYVINRNIN…GQWIVNHQPS (256 aa)). Residues Cys81, Cys85, and Cys88 each coordinate [4Fe-4S] cluster.

It belongs to the radical SAM superfamily. CofH family. In terms of assembly, consists of two subunits, CofG and CofH. It depends on [4Fe-4S] cluster as a cofactor.

The enzyme catalyses 5-amino-6-(D-ribitylamino)uracil + L-tyrosine + S-adenosyl-L-methionine = 5-amino-5-(4-hydroxybenzyl)-6-(D-ribitylimino)-5,6-dihydrouracil + 2-iminoacetate + 5'-deoxyadenosine + L-methionine + H(+). The protein operates within cofactor biosynthesis; coenzyme F0 biosynthesis. Its function is as follows. Catalyzes the radical-mediated synthesis of 5-amino-5-(4-hydroxybenzyl)-6-(D-ribitylimino)-5,6-dihydrouracil from 5-amino-6-(D-ribitylamino)uracil and L-tyrosine. The chain is 5-amino-6-(D-ribitylamino)uracil--L-tyrosine 4-hydroxyphenyl transferase from Thermosynechococcus vestitus (strain NIES-2133 / IAM M-273 / BP-1).